We begin with the raw amino-acid sequence, 295 residues long: Pyridoxal 5'-phosphate synthase subunit PdxS (295 aa).

Asp-25 is a binding site for D-ribose 5-phosphate. Lys-82 acts as the Schiff-base intermediate with D-ribose 5-phosphate in catalysis. A D-ribose 5-phosphate-binding site is contributed by Gly-154. Arg-166 is a D-glyceraldehyde 3-phosphate binding site. D-ribose 5-phosphate contacts are provided by residues Gly-215 and 236–237 (GS).

This sequence belongs to the PdxS/SNZ family. In the presence of PdxT, forms a dodecamer of heterodimers.

It carries out the reaction aldehydo-D-ribose 5-phosphate + D-glyceraldehyde 3-phosphate + L-glutamine = pyridoxal 5'-phosphate + L-glutamate + phosphate + 3 H2O + H(+). It participates in cofactor biosynthesis; pyridoxal 5'-phosphate biosynthesis. Functionally, catalyzes the formation of pyridoxal 5'-phosphate from ribose 5-phosphate (RBP), glyceraldehyde 3-phosphate (G3P) and ammonia. The ammonia is provided by the PdxT subunit. Can also use ribulose 5-phosphate and dihydroxyacetone phosphate as substrates, resulting from enzyme-catalyzed isomerization of RBP and G3P, respectively. This Heliobacterium modesticaldum (strain ATCC 51547 / Ice1) protein is Pyridoxal 5'-phosphate synthase subunit PdxS.